The primary structure comprises 580 residues: PTS system fructose-specific EIIB'BC component (580 aa).

PTS EIIB type-2 domains follow at residues 1-99 and 120-215; these read MSSS…QLAA and IVAI…KALA. The active-site Phosphocysteine intermediate; for EIIB activity is the Cys-126. Cys-126 bears the Phosphocysteine; by EIIA mark. One can recognise a PTS EIIC type-2 domain in the interval 243–580; sequence AYKHLMTGVS…LKKPVADVIA (338 aa). 9 helical membrane-spanning segments follow: residues 254 to 274, 289 to 309, 332 to 352, 369 to 389, 410 to 430, 451 to 471, 483 to 503, 509 to 529, and 549 to 571; these read MLPF…LGGI, LFQI…AGYI, LNAG…GVAA, VLIL…YVFG, SALL…GGPV, AAAM…TWVF, ATAA…PYAA, TIPA…TAGA, and HLLN…LRLL.

The protein localises to the cell inner membrane. The enzyme catalyses D-fructose(out) + N(pros)-phospho-L-histidyl-[protein] = D-fructose 1-phosphate(in) + L-histidyl-[protein]. Functionally, the phosphoenolpyruvate-dependent sugar phosphotransferase system (sugar PTS), a major carbohydrate active transport system, catalyzes the phosphorylation of incoming sugar substrates concomitantly with their translocation across the cell membrane. The enzyme II FruAB PTS system is involved in fructose transport. This is PTS system fructose-specific EIIB'BC component from Xanthomonas campestris pv. campestris (strain ATCC 33913 / DSM 3586 / NCPPB 528 / LMG 568 / P 25).